Here is a 225-residue protein sequence, read N- to C-terminus: Histone H1.11L (225 aa).

2 stretches are compositionally biased toward low complexity: residues 1 to 23 and 31 to 43; these read MSETAPAPAAEAAPAAAPAPAKA and AAGGAKARKPAGP. Disordered regions lie at residues 1–46 and 94–225; these read MSET…PSVT and SKGT…AKKK. Position 2 is an N-acetylserine (S2). Residues 41 to 114 form the H15 domain; that stretch reads AGPSVTELIT…GASGSFRLSK (74 aa). Composition is skewed to basic residues over residues 123–138, 146–163, 171–189, and 198–225; these read APKKKASAAKPKKPAA, KKPKKAVAVKKSPKKAKK, KSAKSPKKVTKAVKPKKAV, and KAVKPKAAKPKAAKPKAAKAKKAAAKKK.

This sequence belongs to the histone H1/H5 family.

The protein resides in the nucleus. Its subcellular location is the chromosome. In terms of biological role, histones H1 are necessary for the condensation of nucleosome chains into higher-order structures. This chain is Histone H1.11L, found in Gallus gallus (Chicken).